A 265-amino-acid polypeptide reads, in one-letter code: Phosphatidylserine decarboxylase proenzyme (265 aa).

Ser183 serves as the catalytic Schiff-base intermediate with substrate; via pyruvic acid. At Ser183 the chain carries Pyruvic acid (Ser); by autocatalysis. The tract at residues 218–242 is disordered; sequence PQIESEPESEPALQTAPVETAANPS.

It belongs to the phosphatidylserine decarboxylase family. PSD-A subfamily. As to quaternary structure, heterodimer of a large membrane-associated beta subunit and a small pyruvoyl-containing alpha subunit. Requires pyruvate as cofactor. In terms of processing, is synthesized initially as an inactive proenzyme. Formation of the active enzyme involves a self-maturation process in which the active site pyruvoyl group is generated from an internal serine residue via an autocatalytic post-translational modification. Two non-identical subunits are generated from the proenzyme in this reaction, and the pyruvate is formed at the N-terminus of the alpha chain, which is derived from the carboxyl end of the proenzyme. The post-translation cleavage follows an unusual pathway, termed non-hydrolytic serinolysis, in which the side chain hydroxyl group of the serine supplies its oxygen atom to form the C-terminus of the beta chain, while the remainder of the serine residue undergoes an oxidative deamination to produce ammonia and the pyruvoyl prosthetic group on the alpha chain.

It is found in the cell membrane. It catalyses the reaction a 1,2-diacyl-sn-glycero-3-phospho-L-serine + H(+) = a 1,2-diacyl-sn-glycero-3-phosphoethanolamine + CO2. The protein operates within phospholipid metabolism; phosphatidylethanolamine biosynthesis; phosphatidylethanolamine from CDP-diacylglycerol: step 2/2. Its function is as follows. Catalyzes the formation of phosphatidylethanolamine (PtdEtn) from phosphatidylserine (PtdSer). The chain is Phosphatidylserine decarboxylase proenzyme from Neisseria meningitidis serogroup C (strain 053442).